Reading from the N-terminus, the 485-residue chain is Glutamyl-tRNA(Gln) amidotransferase subunit A (485 aa).

Active-site charge relay system residues include lysine 78 and serine 153. The active-site Acyl-ester intermediate is serine 177.

Belongs to the amidase family. GatA subfamily. As to quaternary structure, heterotrimer of A, B and C subunits.

It carries out the reaction L-glutamyl-tRNA(Gln) + L-glutamine + ATP + H2O = L-glutaminyl-tRNA(Gln) + L-glutamate + ADP + phosphate + H(+). In terms of biological role, allows the formation of correctly charged Gln-tRNA(Gln) through the transamidation of misacylated Glu-tRNA(Gln) in organisms which lack glutaminyl-tRNA synthetase. The reaction takes place in the presence of glutamine and ATP through an activated gamma-phospho-Glu-tRNA(Gln). The protein is Glutamyl-tRNA(Gln) amidotransferase subunit A of Bacillus cytotoxicus (strain DSM 22905 / CIP 110041 / 391-98 / NVH 391-98).